The primary structure comprises 274 residues: NAD kinase (274 aa).

Asp-61 (proton acceptor) is an active-site residue. NAD(+) is bound by residues 61–62 (DG), Lys-66, 134–135 (ND), Lys-145, Asp-164, and 175–180 (TAYSLS).

The protein belongs to the NAD kinase family. Requires a divalent metal cation as cofactor.

The protein resides in the cytoplasm. It carries out the reaction NAD(+) + ATP = ADP + NADP(+) + H(+). Functionally, involved in the regulation of the intracellular balance of NAD and NADP, and is a key enzyme in the biosynthesis of NADP. Catalyzes specifically the phosphorylation on 2'-hydroxyl of the adenosine moiety of NAD to yield NADP. The protein is NAD kinase of Clostridium tetani (strain Massachusetts / E88).